Here is a 333-residue protein sequence, read N- to C-terminus: tRNA N6-adenosine threonylcarbamoyltransferase (333 aa).

Histidine 111 and histidine 115 together coordinate Fe cation. Residues 134–138 (LASGG), aspartate 167, glycine 180, and asparagine 273 contribute to the substrate site. Residue aspartate 301 coordinates Fe cation.

This sequence belongs to the KAE1 / TsaD family. Fe(2+) serves as cofactor.

The protein localises to the cytoplasm. It catalyses the reaction L-threonylcarbamoyladenylate + adenosine(37) in tRNA = N(6)-L-threonylcarbamoyladenosine(37) in tRNA + AMP + H(+). In terms of biological role, required for the formation of a threonylcarbamoyl group on adenosine at position 37 (t(6)A37) in tRNAs that read codons beginning with adenine. Is involved in the transfer of the threonylcarbamoyl moiety of threonylcarbamoyl-AMP (TC-AMP) to the N6 group of A37, together with TsaE and TsaB. TsaD likely plays a direct catalytic role in this reaction. The chain is tRNA N6-adenosine threonylcarbamoyltransferase from Desulforapulum autotrophicum (strain ATCC 43914 / DSM 3382 / VKM B-1955 / HRM2) (Desulfobacterium autotrophicum).